The sequence spans 168 residues: Crossover junction endodeoxyribonuclease RuvC (168 aa).

Active-site residues include aspartate 10, glutamate 70, and aspartate 143. 3 residues coordinate Mg(2+): aspartate 10, glutamate 70, and aspartate 143.

The protein belongs to the RuvC family. In terms of assembly, homodimer which binds Holliday junction (HJ) DNA. The HJ becomes 2-fold symmetrical on binding to RuvC with unstacked arms; it has a different conformation from HJ DNA in complex with RuvA. In the full resolvosome a probable DNA-RuvA(4)-RuvB(12)-RuvC(2) complex forms which resolves the HJ. Mg(2+) is required as a cofactor.

Its subcellular location is the cytoplasm. The catalysed reaction is Endonucleolytic cleavage at a junction such as a reciprocal single-stranded crossover between two homologous DNA duplexes (Holliday junction).. The RuvA-RuvB-RuvC complex processes Holliday junction (HJ) DNA during genetic recombination and DNA repair. Endonuclease that resolves HJ intermediates. Cleaves cruciform DNA by making single-stranded nicks across the HJ at symmetrical positions within the homologous arms, yielding a 5'-phosphate and a 3'-hydroxyl group; requires a central core of homology in the junction. The consensus cleavage sequence is 5'-(A/T)TT(C/G)-3'. Cleavage occurs on the 3'-side of the TT dinucleotide at the point of strand exchange. HJ branch migration catalyzed by RuvA-RuvB allows RuvC to scan DNA until it finds its consensus sequence, where it cleaves and resolves the cruciform DNA. This is Crossover junction endodeoxyribonuclease RuvC from Thermotoga maritima (strain ATCC 43589 / DSM 3109 / JCM 10099 / NBRC 100826 / MSB8).